Here is a 239-residue protein sequence, read N- to C-terminus: 1-(5-phosphoribosyl)-5-[(5-phosphoribosylamino)methylideneamino] imidazole-4-carboxamide isomerase (239 aa).

Catalysis depends on aspartate 8, which acts as the Proton acceptor. Catalysis depends on aspartate 130, which acts as the Proton donor.

The protein belongs to the HisA/HisF family.

The protein localises to the cytoplasm. The catalysed reaction is 1-(5-phospho-beta-D-ribosyl)-5-[(5-phospho-beta-D-ribosylamino)methylideneamino]imidazole-4-carboxamide = 5-[(5-phospho-1-deoxy-D-ribulos-1-ylimino)methylamino]-1-(5-phospho-beta-D-ribosyl)imidazole-4-carboxamide. Its pathway is amino-acid biosynthesis; L-histidine biosynthesis; L-histidine from 5-phospho-alpha-D-ribose 1-diphosphate: step 4/9. This is 1-(5-phosphoribosyl)-5-[(5-phosphoribosylamino)methylideneamino] imidazole-4-carboxamide isomerase from Streptococcus thermophilus (strain ATCC BAA-491 / LMD-9).